Here is an 812-residue protein sequence, read N- to C-terminus: Leucine--tRNA ligase (812 aa).

The 'HIGH' region motif lies at 40–51 (SYPSGSNLHAGH). A 'KMSKS' region motif is present at residues 572–576 (KMSKS). Residue lysine 575 coordinates ATP.

Belongs to the class-I aminoacyl-tRNA synthetase family.

It localises to the cytoplasm. The catalysed reaction is tRNA(Leu) + L-leucine + ATP = L-leucyl-tRNA(Leu) + AMP + diphosphate. The chain is Leucine--tRNA ligase from Clostridium tetani (strain Massachusetts / E88).